A 282-amino-acid polypeptide reads, in one-letter code: NADPH-dependent 7-cyano-7-deazaguanine reductase (282 aa).

Isoleucine 88 to serine 90 lines the substrate pocket. Serine 90–lysine 91 contributes to the NADPH binding site. The active-site Thioimide intermediate is the cysteine 190. The active-site Proton donor is the aspartate 197. Residue histidine 229–glutamate 230 coordinates substrate. Arginine 258–glycine 259 provides a ligand contact to NADPH.

It belongs to the GTP cyclohydrolase I family. QueF type 2 subfamily. As to quaternary structure, homodimer.

The protein localises to the cytoplasm. The catalysed reaction is 7-aminomethyl-7-carbaguanine + 2 NADP(+) = 7-cyano-7-deazaguanine + 2 NADPH + 3 H(+). Its pathway is tRNA modification; tRNA-queuosine biosynthesis. Functionally, catalyzes the NADPH-dependent reduction of 7-cyano-7-deazaguanine (preQ0) to 7-aminomethyl-7-deazaguanine (preQ1). This Escherichia coli O17:K52:H18 (strain UMN026 / ExPEC) protein is NADPH-dependent 7-cyano-7-deazaguanine reductase.